We begin with the raw amino-acid sequence, 150 residues long: Large ribosomal subunit protein uL13 (150 aa).

The protein belongs to the universal ribosomal protein uL13 family. Part of the 50S ribosomal subunit.

This protein is one of the early assembly proteins of the 50S ribosomal subunit, although it is not seen to bind rRNA by itself. It is important during the early stages of 50S assembly. This chain is Large ribosomal subunit protein uL13, found in Chlamydia trachomatis serovar A (strain ATCC VR-571B / DSM 19440 / HAR-13).